The sequence spans 334 residues: Glutaredoxin-3 (334 aa).

The residue at position 2 (A2) is an N-acetylalanine. One can recognise a Thioredoxin domain in the interval 2–116; the sequence is AGGAAEAAAA…LTKKVQRHAS (115 aa). Residues 110–131 form a disordered region; it reads KVQRHASSGSFSPSGSEHPKED. A phosphoserine mark is found at S116 and S119. Over residues 116–125 the composition is skewed to low complexity; the sequence is SSGSFSPSGS. 2 consecutive Glutaredoxin domains span residues 145–235 and 236–334; these read CMLF…PKLE and ERLK…KGEN. The [2Fe-2S] cluster site is built by C158 and C260.

In terms of assembly, homodimer; the homodimer is independent of 2Fe-2S clusters. Heterotrimer; forms a heterotrimeric complex composed by two BOLA2 molecules and one GLRX3 molecule; linked by [2Fe-2S] clusters. Interacts (via N-terminus) with PRKCQ/PKC-theta. Interacts (via C-terminus) with CSRP3. Interacts with CSRP2.

Its subcellular location is the cytoplasm. The protein localises to the cytosol. It is found in the cell cortex. The protein resides in the myofibril. It localises to the sarcomere. Its subcellular location is the z line. Its function is as follows. Together with BOLA2, acts as a cytosolic iron-sulfur (Fe-S) cluster assembly factor that facilitates [2Fe-2S] cluster insertion into a subset of cytosolic proteins. Acts as a critical negative regulator of cardiac hypertrophy and a positive inotropic regulator. Required for hemoglobin maturation. Does not possess any thyoredoxin activity since it lacks the conserved motif that is essential for catalytic activity. This chain is Glutaredoxin-3 (GLRX3), found in Bos taurus (Bovine).